Consider the following 401-residue polypeptide: Nicotinate phosphoribosyltransferase (401 aa).

His221 is subject to Phosphohistidine; by autocatalysis.

The protein belongs to the NAPRTase family. Post-translationally, transiently phosphorylated on a His residue during the reaction cycle. Phosphorylation strongly increases the affinity for substrates and increases the rate of nicotinate D-ribonucleotide production. Dephosphorylation regenerates the low-affinity form of the enzyme, leading to product release.

It catalyses the reaction nicotinate + 5-phospho-alpha-D-ribose 1-diphosphate + ATP + H2O = nicotinate beta-D-ribonucleotide + ADP + phosphate + diphosphate. It participates in cofactor biosynthesis; NAD(+) biosynthesis; nicotinate D-ribonucleotide from nicotinate: step 1/1. In terms of biological role, catalyzes the synthesis of beta-nicotinate D-ribonucleotide from nicotinate and 5-phospho-D-ribose 1-phosphate at the expense of ATP. This Yersinia enterocolitica serotype O:8 / biotype 1B (strain NCTC 13174 / 8081) protein is Nicotinate phosphoribosyltransferase.